The following is a 379-amino-acid chain: Carbamoyl phosphate synthase small chain (379 aa).

The CPSase stretch occupies residues 1–189; sequence MSKLALLVLE…GLPEAKDDSE (189 aa). Positions 47, 241, and 243 each coordinate L-glutamine. Positions 193 to 379 constitute a Glutamine amidotransferase type-1 domain; sequence HVVAYDFGAK…FIELIKKHSA (187 aa). Catalysis depends on Cys-269, which acts as the Nucleophile. The L-glutamine site is built by Leu-270, Gln-273, Asn-311, Gly-313, and Phe-314. Active-site residues include His-353 and Glu-355.

It belongs to the CarA family. As to quaternary structure, composed of two chains; the small (or glutamine) chain promotes the hydrolysis of glutamine to ammonia, which is used by the large (or ammonia) chain to synthesize carbamoyl phosphate. Tetramer of heterodimers (alpha,beta)4.

The catalysed reaction is hydrogencarbonate + L-glutamine + 2 ATP + H2O = carbamoyl phosphate + L-glutamate + 2 ADP + phosphate + 2 H(+). The enzyme catalyses L-glutamine + H2O = L-glutamate + NH4(+). It participates in amino-acid biosynthesis; L-arginine biosynthesis; carbamoyl phosphate from bicarbonate: step 1/1. The protein operates within pyrimidine metabolism; UMP biosynthesis via de novo pathway; (S)-dihydroorotate from bicarbonate: step 1/3. Its function is as follows. Small subunit of the glutamine-dependent carbamoyl phosphate synthetase (CPSase). CPSase catalyzes the formation of carbamoyl phosphate from the ammonia moiety of glutamine, carbonate, and phosphate donated by ATP, constituting the first step of 2 biosynthetic pathways, one leading to arginine and/or urea and the other to pyrimidine nucleotides. The small subunit (glutamine amidotransferase) binds and cleaves glutamine to supply the large subunit with the substrate ammonia. The sequence is that of Carbamoyl phosphate synthase small chain from Vibrio parahaemolyticus serotype O3:K6 (strain RIMD 2210633).